A 208-amino-acid chain; its full sequence is Small ribosomal subunit protein uS4 (208 aa).

Residues 98–163 enclose the S4 RNA-binding domain; it reads RRLDNVVYRL…KPRFIEIKEK (66 aa).

The protein belongs to the universal ribosomal protein uS4 family. As to quaternary structure, part of the 30S ribosomal subunit. Contacts protein S5. The interaction surface between S4 and S5 is involved in control of translational fidelity.

One of the primary rRNA binding proteins, it binds directly to 16S rRNA where it nucleates assembly of the body of the 30S subunit. Functionally, with S5 and S12 plays an important role in translational accuracy. This chain is Small ribosomal subunit protein uS4, found in Caldicellulosiruptor saccharolyticus (strain ATCC 43494 / DSM 8903 / Tp8T 6331).